The primary structure comprises 167 residues: Protein archease (167 aa).

At alanine 2 the chain carries N-acetylalanine. Ca(2+)-binding residues include aspartate 39, aspartate 166, and isoleucine 167.

It belongs to the archease family. As to quaternary structure, component of the tRNA-splicing ligase complex.

Component of the tRNA-splicing ligase complex required to facilitate the enzymatic turnover of catalytic subunit RTCB. Together with DDX1, acts by facilitating the guanylylation of RTCB, a key intermediate step in tRNA ligation. The protein is Protein archease (ZBTB8OS) of Homo sapiens (Human).